The following is a 217-amino-acid chain: Phosphoenolpyruvate guanylyltransferase (217 aa).

Positions 150, 165, and 168 each coordinate phosphoenolpyruvate.

This sequence belongs to the CofC family.

It carries out the reaction phosphoenolpyruvate + GTP + H(+) = enolpyruvoyl-2-diphospho-5'-guanosine + diphosphate. The protein operates within cofactor biosynthesis; coenzyme F420 biosynthesis. Functionally, guanylyltransferase that catalyzes the activation of phosphoenolpyruvate (PEP) as enolpyruvoyl-2-diphospho-5'-guanosine, via the condensation of PEP with GTP. It is involved in the biosynthesis of coenzyme F420, a hydride carrier cofactor. The protein is Phosphoenolpyruvate guanylyltransferase of Mycobacterium ulcerans (strain Agy99).